A 329-amino-acid polypeptide reads, in one-letter code: DNA repair and recombination protein RadA (329 aa).

Residue 107–114 (GEFGSGKS) participates in ATP binding.

It belongs to the eukaryotic RecA-like protein family.

Involved in DNA repair and in homologous recombination. Binds and assemble on single-stranded DNA to form a nucleoprotein filament. Hydrolyzes ATP in a ssDNA-dependent manner and promotes DNA strand exchange between homologous DNA molecules. The sequence is that of DNA repair and recombination protein RadA from Methanocorpusculum labreanum (strain ATCC 43576 / DSM 4855 / Z).